We begin with the raw amino-acid sequence, 290 residues long: Pre-mRNA-splicing factor cwf20 (290 aa).

Disordered stretches follow at residues 1-61 (MSLV…KSSF) and 114-134 (PNNS…KKST). The span at 114–128 (PNNSVSDLTSTGSSE) shows a compositional bias: polar residues.

In terms of assembly, belongs to the 40S cdc5-associated complex (or cwf complex), a spliceosome sub-complex reminiscent of a late-stage spliceosome composed of the U2, U5 and U6 snRNAs and at least brr2, cdc5, cwf2/prp3, cwf3/syf1, cwf4/syf3, cwf5/ecm2, spp42/cwf6, cwf7/spf27, cwf8, cwf9, cwf10, cwf11, cwf12, prp45/cwf13, cwf14, cwf15, cwf16, cwf17, cwf18, cwf19, cwf20, cwf21, cwf22, cwf23, cwf24, cwf25, cwf26, cyp7/cwf27, cwf28, cwf29/ist3, lea1, msl1, prp5/cwf1, prp10, prp12/sap130, prp17, prp22, sap61, sap62, sap114, sap145, slu7, smb1, smd1, smd3, smf1, smg1 and syf2.

The protein resides in the nucleus. Involved in mRNA splicing where it associates with cdc5 and the other cwf proteins as part of the spliceosome. The protein is Pre-mRNA-splicing factor cwf20 (cwf20) of Schizosaccharomyces pombe (strain 972 / ATCC 24843) (Fission yeast).